Consider the following 283-residue polypeptide: Pantothenate synthetase (283 aa).

Residue 30 to 37 (MGYLHDGH) participates in ATP binding. His37 (proton donor) is an active-site residue. Residue Gln61 participates in (R)-pantoate binding. Residue Gln61 participates in beta-alanine binding. ATP is bound at residue 148-151 (GQKD). Gln154 provides a ligand contact to (R)-pantoate. 185 to 188 (MSSR) is an ATP binding site.

This sequence belongs to the pantothenate synthetase family. As to quaternary structure, homodimer.

It is found in the cytoplasm. It carries out the reaction (R)-pantoate + beta-alanine + ATP = (R)-pantothenate + AMP + diphosphate + H(+). It functions in the pathway cofactor biosynthesis; (R)-pantothenate biosynthesis; (R)-pantothenate from (R)-pantoate and beta-alanine: step 1/1. Catalyzes the condensation of pantoate with beta-alanine in an ATP-dependent reaction via a pantoyl-adenylate intermediate. The protein is Pantothenate synthetase of Carboxydothermus hydrogenoformans (strain ATCC BAA-161 / DSM 6008 / Z-2901).